Reading from the N-terminus, the 473-residue chain is H(+)/Cl(-) exchange transporter ClcA (473 aa).

The Cytoplasmic portion of the chain corresponds to 1 to 32 (MKTDTPSLETPQAARLRRRQLIRQLLERDKTP). A helical transmembrane segment spans residues 33–69 (LAILFMAAVVGTLVGLAAVAFDKGVAWLQNQRMGALV). At 70–76 (HTADNYP) the chain is on the periplasmic side. A helical transmembrane segment spans residues 77–100 (LLLTVAFLCSAVLAMFGYFLVRKY). Residues 106–110 (GSGIP) carry the Selectivity filter part_1 motif. S107 contacts chloride. Residues 109–116 (IPEIEGAL) constitute an intramembrane region (helical). The Cytoplasmic segment spans residues 117-123 (EDQRPVR). The next 2 membrane-spanning stretches (helical) occupy residues 124-141 (WWRVLPVKFFGGLGTLGG) and 148-166 (EGPTVQIGGNIGRMVLDIF). Positions 146 to 150 (GREGP) match the Selectivity filter part_2 motif. Residues 167–176 (RLKGDEARHT) lie on the Cytoplasmic side of the membrane. 2 intramembrane regions (helical) span residues 177-189 (LLATGAAAGLAAA) and 193-201 (PLAGILFII). At 202–214 (EEMRPQFRYTLIS) the chain is on the cytoplasmic side. A helical transmembrane segment spans residues 215-232 (IKAVFIGVIMSTIMYRIF). Over 233 to 252 (NHEVALIDVGKLSDAPLNTL) the chain is Periplasmic. A helical transmembrane segment spans residues 253 to 281 (WLYLILGIIFGIFGPIFNKWVLGMQDLLH). Residues 282-287 (RVHGGN) are Cytoplasmic-facing. The chain crosses the membrane as a helical span at residues 288–309 (ITKWILMGGAIGGLCGLLGFVA). Residues 310–329 (PATSGGGFNLIPIATAGNFS) lie on the Periplasmic side of the membrane. 2 helical membrane passes run 330-349 (MGMLVFIFVARVITTLLCFS) and 355-376 (GIFAPMLALGTVLGTAFGMVAV). Positions 355–359 (GIFAP) match the Selectivity filter part_3 motif. Residues I356 and F357 each contribute to the chloride site. The Periplasmic portion of the chain corresponds to 377–386 (ELFPQYHLEA). An intramembrane region (helical) is located at residues 387 to 401 (GTFAIAGMGALLAAS). The segment at residues 402–404 (IRA) is an intramembrane region (note=Loop between two helices). Residues 405–416 (PLTGIILVLEMT) constitute an intramembrane region (helical). Positions 417-421 (DNYQL) form an intramembrane region, note=Loop between two helices. A helical transmembrane segment spans residues 422 to 438 (ILPMIITGLGATLLAQF). Topologically, residues 439-473 (TGGKPLYSAILARTLAKQEAEQLARSKAASASENT) are cytoplasmic. Y445 contacts chloride.

Belongs to the chloride channel (TC 2.A.49) family. ClcA subfamily. Homodimer.

It localises to the cell inner membrane. It catalyses the reaction 2 chloride(in) + H(+)(out) = 2 chloride(out) + H(+)(in). Functionally, proton-coupled chloride transporter. Functions as antiport system and exchanges two chloride ions for 1 proton. Probably acts as an electrical shunt for an outwardly-directed proton pump that is linked to amino acid decarboxylation, as part of the extreme acid resistance (XAR) response. The polypeptide is H(+)/Cl(-) exchange transporter ClcA (Escherichia coli O9:H4 (strain HS)).